Reading from the N-terminus, the 377-residue chain is Histidinol-phosphate aminotransferase (377 aa).

Lysine 232 carries the post-translational modification N6-(pyridoxal phosphate)lysine.

It belongs to the class-II pyridoxal-phosphate-dependent aminotransferase family. Histidinol-phosphate aminotransferase subfamily. Homodimer. The cofactor is pyridoxal 5'-phosphate.

The catalysed reaction is L-histidinol phosphate + 2-oxoglutarate = 3-(imidazol-4-yl)-2-oxopropyl phosphate + L-glutamate. It participates in amino-acid biosynthesis; L-histidine biosynthesis; L-histidine from 5-phospho-alpha-D-ribose 1-diphosphate: step 7/9. The polypeptide is Histidinol-phosphate aminotransferase (Mycobacterium sp. (strain JLS)).